The following is a 297-amino-acid chain: uncharacterized protein (297 aa).

The next 6 helical transmembrane spans lie at 26–48 (FVLHGLSVIAVSIATLLSAIYAI), 80–102 (NIELLGVTFVFGLVIVAALAALF), 134–156 (LFKFELILTLLIGIAFIPLINLG), 185–205 (LGIFAITIQFLFTFVPYAIVI), 225–247 (LVDTIIMWLLVGLAGMALQVAAY), and 262–284 (LVAVILGWVAVMPITTCWWVELY).

It localises to the cell membrane. This is an uncharacterized protein from Archaeoglobus fulgidus (strain ATCC 49558 / DSM 4304 / JCM 9628 / NBRC 100126 / VC-16).